The following is a 975-amino-acid chain: Glycine dehydrogenase (decarboxylating) (975 aa).

Lys-723 is subject to N6-(pyridoxal phosphate)lysine.

It belongs to the GcvP family. The glycine cleavage system is composed of four proteins: P, T, L and H. Pyridoxal 5'-phosphate is required as a cofactor.

The enzyme catalyses N(6)-[(R)-lipoyl]-L-lysyl-[glycine-cleavage complex H protein] + glycine + H(+) = N(6)-[(R)-S(8)-aminomethyldihydrolipoyl]-L-lysyl-[glycine-cleavage complex H protein] + CO2. In terms of biological role, the glycine cleavage system catalyzes the degradation of glycine. The P protein binds the alpha-amino group of glycine through its pyridoxal phosphate cofactor; CO(2) is released and the remaining methylamine moiety is then transferred to the lipoamide cofactor of the H protein. This chain is Glycine dehydrogenase (decarboxylating), found in Burkholderia cenocepacia (strain HI2424).